A 68-amino-acid polypeptide reads, in one-letter code: Metallothionein (68 aa).

The protein belongs to the metallothionein superfamily. Type 4 family.

In terms of biological role, metallothioneins have a high content of cysteine residues that bind various heavy metals. This chain is Metallothionein (MT1), found in Lytechinus pictus (Painted sea urchin).